The primary structure comprises 271 residues: Putative pyruvate, phosphate dikinase regulatory protein (271 aa).

ADP is bound at residue 151–158; it reads GISRTSKT.

This sequence belongs to the pyruvate, phosphate/water dikinase regulatory protein family. PDRP subfamily.

It catalyses the reaction N(tele)-phospho-L-histidyl/L-threonyl-[pyruvate, phosphate dikinase] + ADP = N(tele)-phospho-L-histidyl/O-phospho-L-threonyl-[pyruvate, phosphate dikinase] + AMP + H(+). The catalysed reaction is N(tele)-phospho-L-histidyl/O-phospho-L-threonyl-[pyruvate, phosphate dikinase] + phosphate + H(+) = N(tele)-phospho-L-histidyl/L-threonyl-[pyruvate, phosphate dikinase] + diphosphate. Bifunctional serine/threonine kinase and phosphorylase involved in the regulation of the pyruvate, phosphate dikinase (PPDK) by catalyzing its phosphorylation/dephosphorylation. The protein is Putative pyruvate, phosphate dikinase regulatory protein of Streptococcus uberis (strain ATCC BAA-854 / 0140J).